The primary structure comprises 501 residues: Lysine--tRNA ligase (501 aa).

The Mg(2+) site is built by Glu411 and Glu418.

It belongs to the class-II aminoacyl-tRNA synthetase family. Homodimer. The cofactor is Mg(2+).

The protein resides in the cytoplasm. The enzyme catalyses tRNA(Lys) + L-lysine + ATP = L-lysyl-tRNA(Lys) + AMP + diphosphate. The polypeptide is Lysine--tRNA ligase (Magnetococcus marinus (strain ATCC BAA-1437 / JCM 17883 / MC-1)).